The primary structure comprises 224 residues: UPF0758 protein Bpro_0948 (224 aa).

In terms of domain architecture, MPN spans 102–224 (LFSTPQAVRD…AVSMAELGLL (123 aa)). Residues H173, H175, and D186 each coordinate Zn(2+). The JAMM motif signature appears at 173–186 (HNHPSGAATPSRAD).

The protein belongs to the UPF0758 family.

This Polaromonas sp. (strain JS666 / ATCC BAA-500) protein is UPF0758 protein Bpro_0948.